A 583-amino-acid chain; its full sequence is Aspartate--tRNA(Asp/Asn) ligase (583 aa).

E173 contacts L-aspartate. An aspartate region spans residues 197-200 (QMFK). R219 is a binding site for L-aspartate. ATP is bound by residues 219–221 (RDE) and Q228. An L-aspartate-binding site is contributed by H447. E481 provides a ligand contact to ATP. R488 lines the L-aspartate pocket. 533 to 536 (GLDR) lines the ATP pocket.

The protein belongs to the class-II aminoacyl-tRNA synthetase family. Type 1 subfamily. In terms of assembly, homodimer.

It localises to the cytoplasm. The enzyme catalyses tRNA(Asx) + L-aspartate + ATP = L-aspartyl-tRNA(Asx) + AMP + diphosphate. Functionally, aspartyl-tRNA synthetase with relaxed tRNA specificity since it is able to aspartylate not only its cognate tRNA(Asp) but also tRNA(Asn). Reaction proceeds in two steps: L-aspartate is first activated by ATP to form Asp-AMP and then transferred to the acceptor end of tRNA(Asp/Asn). The chain is Aspartate--tRNA(Asp/Asn) ligase from Elusimicrobium minutum (strain Pei191).